The primary structure comprises 454 residues: Sensor histidine kinase RppB (454 aa).

The Periplasmic portion of the chain corresponds to 1–13 (MNTRRLFARSRLQ). The chain crosses the membrane as a helical span at residues 14–34 (LAFWYALVMGGILTLLGLGVY). At 35 to 186 (RAIVQANWMA…LAAFDAENKR (152 aa)) the chain is on the cytoplasmic side. Residues 187 to 207 (ILWILGLSFPIALGLVAFSSW) form a helical membrane-spanning segment. Topologically, residues 208-454 (GLAGLAMRPI…PIFSVPIVHS (247 aa)) are periplasmic. A Histidine kinase domain is found at 230 to 448 (NAAHELRSPL…LFTIQLPIFS (219 aa)). Histidine 233 is modified (phosphohistidine; by autocatalysis).

It is found in the cell inner membrane. It carries out the reaction ATP + protein L-histidine = ADP + protein N-phospho-L-histidine.. Its function is as follows. Member of two-component regulatory system RppA/RppB, involved in the establishment of the appropriate stoichiometry between the 2 photosystems. It senses changes in the plastoquinone (PQ) redox poise. Another group shows this two-component pair, renamed NrsR/NrsS, controls the nickel-dependent expression of the nrsBACD operon; they suggest the photosystem-related activities seen earlier are due to the expression of NrsS (RppB) in the absence of its natural substrate NrsR (RppA). The chain is Sensor histidine kinase RppB from Synechocystis sp. (strain ATCC 27184 / PCC 6803 / Kazusa).